The chain runs to 303 residues: T-box protein 38 (303 aa).

Positions 14 to 195 form a DNA-binding region, T-box; that stretch reads LSTPEIWEEF…HNKFASGFRS (182 aa). The segment at 193-225 is disordered; it reads FRSNGKRRLSSDSENSENSPPKRSKLVTPPTIS. Over residues 204-213 the composition is skewed to low complexity; the sequence is DSENSENSPP.

It is found in the nucleus. Functionally, transcription factor. Required for mesodermal induction, acting redundantly with transcription factor tbx-37. Together with tbx-37, acts by inducing cell fates in the AB lineage, thereby playing a role in development of the anterior pharynx. The chain is T-box protein 38 (tbx-38) from Caenorhabditis elegans.